We begin with the raw amino-acid sequence, 287 residues long: uncharacterized protein (287 aa).

Residues 183–281 (WEAARYLQEH…GISPIEYRKI (99 aa)) enclose the HTH araC/xylS-type domain. 2 DNA-binding regions (H-T-H motif) span residues 200 to 221 (KDLS…QQVL) and 248 to 271 (MGVI…KQIE).

This is an uncharacterized protein from Bacillus subtilis (strain 168).